The sequence spans 219 residues: ATP synthase subunit a (219 aa).

Helical transmembrane passes span Leu16 to Ile36, Leu57 to Phe79, Leu96 to Ile116, Ala122 to Met142, Leu158 to Leu178, and Thr184 to Ile204.

Belongs to the ATPase A chain family. As to quaternary structure, F-type ATPases have 2 components, CF(1) - the catalytic core - and CF(0) - the membrane proton channel. CF(1) has five subunits: alpha(3), beta(3), gamma(1), delta(1), epsilon(1). CF(0) has three main subunits: a, b and c.

The protein resides in the mitochondrion inner membrane. In terms of biological role, mitochondrial membrane ATP synthase (F(1)F(0) ATP synthase or Complex V) produces ATP from ADP in the presence of a proton gradient across the membrane which is generated by electron transport complexes of the respiratory chain. F-type ATPases consist of two structural domains, F(1) - containing the extramembraneous catalytic core and F(0) - containing the membrane proton channel, linked together by a central stalk and a peripheral stalk. During catalysis, ATP synthesis in the catalytic domain of F(1) is coupled via a rotary mechanism of the central stalk subunits to proton translocation. Key component of the proton channel; it may play a direct role in the translocation of protons across the membrane. This is ATP synthase subunit a (ATP6) from Artemia franciscana (Brine shrimp).